Reading from the N-terminus, the 555-residue chain is Undecaprenyl phosphate-alpha-4-amino-4-deoxy-L-arabinose arabinosyl transferase (555 aa).

11 helical membrane passes run 6-26 (GSWA…PLNG), 87-107 (FGSV…AMLM), 116-136 (LATL…YSVL), 178-198 (FMTK…PIVI), 206-226 (LLIY…PWAL), 257-277 (APFW…LALL), 293-313 (ELFF…IAKG), 315-335 (LPTY…AYAE), 351-371 (VLNG…GSGL), 384-404 (PKIV…VVSV), and 411-431 (WSWA…AIPQ).

It belongs to the glycosyltransferase 83 family.

The protein localises to the cell inner membrane. It catalyses the reaction 4-amino-4-deoxy-alpha-L-arabinopyranosyl di-trans,octa-cis-undecaprenyl phosphate + lipid IVA = lipid IIA + di-trans,octa-cis-undecaprenyl phosphate.. It functions in the pathway lipopolysaccharide metabolism; 4-amino-4-deoxy-beta-L-arabinose-lipid A biosynthesis. Its function is as follows. Catalyzes the transfer of the L-Ara4N moiety of the glycolipid undecaprenyl phosphate-alpha-L-Ara4N to lipid A. The modified arabinose is attached to lipid A and is required for resistance to polymyxin and cationic antimicrobial peptides. The polypeptide is Undecaprenyl phosphate-alpha-4-amino-4-deoxy-L-arabinose arabinosyl transferase (Serratia proteamaculans (strain 568)).